A 192-amino-acid polypeptide reads, in one-letter code: Orotate phosphoribosyltransferase (192 aa).

116-124 (EDIVTTGLS) lines the 5-phospho-alpha-D-ribose 1-diphosphate pocket. Residues Thr120 and Arg148 each contribute to the orotate site.

It belongs to the purine/pyrimidine phosphoribosyltransferase family. PyrE subfamily. As to quaternary structure, homodimer. Mg(2+) is required as a cofactor.

It catalyses the reaction orotidine 5'-phosphate + diphosphate = orotate + 5-phospho-alpha-D-ribose 1-diphosphate. The protein operates within pyrimidine metabolism; UMP biosynthesis via de novo pathway; UMP from orotate: step 1/2. Functionally, catalyzes the transfer of a ribosyl phosphate group from 5-phosphoribose 1-diphosphate to orotate, leading to the formation of orotidine monophosphate (OMP). In Bartonella bacilliformis (strain ATCC 35685 / KC583 / Herrer 020/F12,63), this protein is Orotate phosphoribosyltransferase.